The sequence spans 255 residues: 14-3-3 protein 5 (255 aa).

The protein belongs to the 14-3-3 family. As to quaternary structure, homodimer.

This chain is 14-3-3 protein 5 (TFT5), found in Solanum lycopersicum (Tomato).